Consider the following 152-residue polypeptide: 6,7-dimethyl-8-ribityllumazine synthase (152 aa).

5-amino-6-(D-ribitylamino)uracil is bound by residues Phe-21, 55–57, and 79–81; these read AFE and CVI. 84-85 is a (2S)-2-hydroxy-3-oxobutyl phosphate binding site; the sequence is AT. Catalysis depends on His-87, which acts as the Proton donor. Phe-112 provides a ligand contact to 5-amino-6-(D-ribitylamino)uracil. Arg-126 provides a ligand contact to (2S)-2-hydroxy-3-oxobutyl phosphate.

Belongs to the DMRL synthase family. Forms an icosahedral capsid composed of 60 subunits, arranged as a dodecamer of pentamers.

It carries out the reaction (2S)-2-hydroxy-3-oxobutyl phosphate + 5-amino-6-(D-ribitylamino)uracil = 6,7-dimethyl-8-(1-D-ribityl)lumazine + phosphate + 2 H2O + H(+). It participates in cofactor biosynthesis; riboflavin biosynthesis; riboflavin from 2-hydroxy-3-oxobutyl phosphate and 5-amino-6-(D-ribitylamino)uracil: step 1/2. Catalyzes the formation of 6,7-dimethyl-8-ribityllumazine by condensation of 5-amino-6-(D-ribitylamino)uracil with 3,4-dihydroxy-2-butanone 4-phosphate. This is the penultimate step in the biosynthesis of riboflavin. The sequence is that of 6,7-dimethyl-8-ribityllumazine synthase from Staphylococcus carnosus (strain TM300).